Here is a 444-residue protein sequence, read N- to C-terminus: Serine/threonine-protein kinase 2 (444 aa).

One can recognise a Protein kinase domain in the interval 87–444 (NRDFYHLSTG…WIDGKSTSHQ (358 aa)). ATP-binding positions include 93–101 (LSTGGYGII) and K118. D307 (proton acceptor) is an active-site residue.

Belongs to the protein kinase superfamily. Ser/Thr protein kinase family. Poxviruses subfamily. Post-translationally, phosphorylated in vivo. Autophosphorylated in vitro.

The protein resides in the host endoplasmic reticulum. The protein localises to the host endoplasmic reticulum-Golgi intermediate compartment. The catalysed reaction is L-seryl-[protein] + ATP = O-phospho-L-seryl-[protein] + ADP + H(+). The enzyme catalyses L-threonyl-[protein] + ATP = O-phospho-L-threonyl-[protein] + ADP + H(+). In terms of biological role, essential serine-protein kinase involved in the early stage of virion morphogenesis. This Vertebrata (FPV) protein is Serine/threonine-protein kinase 2 (OPG054).